Here is a 251-residue protein sequence, read N- to C-terminus: Segregation and condensation protein A (251 aa).

This sequence belongs to the ScpA family. As to quaternary structure, component of a cohesin-like complex composed of ScpA, ScpB and the Smc homodimer, in which ScpA and ScpB bind to the head domain of Smc. The presence of the three proteins is required for the association of the complex with DNA.

It is found in the cytoplasm. In terms of biological role, participates in chromosomal partition during cell division. May act via the formation of a condensin-like complex containing Smc and ScpB that pull DNA away from mid-cell into both cell halves. This Clostridium botulinum (strain Alaska E43 / Type E3) protein is Segregation and condensation protein A.